A 250-amino-acid chain; its full sequence is 2,3-bisphosphoglycerate-dependent phosphoglycerate mutase (250 aa).

Substrate is bound by residues 10 to 17, 23 to 24, Arg-62, 89 to 92, Lys-100, 116 to 117, and 185 to 186; these read RHGESEWN, TG, ERHY, RR, and GN. His-11 acts as the Tele-phosphohistidine intermediate in catalysis. The Proton donor/acceptor role is filled by Glu-89.

This sequence belongs to the phosphoglycerate mutase family. BPG-dependent PGAM subfamily. As to quaternary structure, homodimer.

It catalyses the reaction (2R)-2-phosphoglycerate = (2R)-3-phosphoglycerate. It participates in carbohydrate degradation; glycolysis; pyruvate from D-glyceraldehyde 3-phosphate: step 3/5. Its function is as follows. Catalyzes the interconversion of 2-phosphoglycerate and 3-phosphoglycerate. The polypeptide is 2,3-bisphosphoglycerate-dependent phosphoglycerate mutase (Edwardsiella ictaluri (strain 93-146)).